Consider the following 137-residue polypeptide: Putative protein YjhV (137 aa).

Residues 1-16 (MVGYHQTNQKTDTGKT) are compositionally biased toward polar residues. The segment at 1 to 20 (MVGYHQTNQKTDTGKTLTRR) is disordered.

The sequence is that of Putative protein YjhV (yjhV) from Escherichia coli (strain K12).